The sequence spans 35 residues: Photosystem II reaction center protein T (35 aa).

The chain crosses the membrane as a helical span at residues 3–23 (ALVYTFLLVGTLGIIFFAIFF).

Belongs to the PsbT family. PSII is composed of 1 copy each of membrane proteins PsbA, PsbB, PsbC, PsbD, PsbE, PsbF, PsbH, PsbI, PsbJ, PsbK, PsbL, PsbM, PsbT, PsbY, PsbZ, Psb30/Ycf12, at least 3 peripheral proteins of the oxygen-evolving complex and a large number of cofactors. It forms dimeric complexes.

The protein localises to the plastid. Its subcellular location is the chloroplast thylakoid membrane. Found at the monomer-monomer interface of the photosystem II (PS II) dimer, plays a role in assembly and dimerization of PSII. PSII is a light-driven water plastoquinone oxidoreductase, using light energy to abstract electrons from H(2)O, generating a proton gradient subsequently used for ATP formation. The sequence is that of Photosystem II reaction center protein T from Chara vulgaris (Common stonewort).